A 278-amino-acid chain; its full sequence is Elongation factor Ts (278 aa).

Residues 80 to 83 (TDFV) form an involved in Mg(2+) ion dislocation from EF-Tu region.

Belongs to the EF-Ts family.

It localises to the cytoplasm. Functionally, associates with the EF-Tu.GDP complex and induces the exchange of GDP to GTP. It remains bound to the aminoacyl-tRNA.EF-Tu.GTP complex up to the GTP hydrolysis stage on the ribosome. This chain is Elongation factor Ts, found in Paenarthrobacter aurescens (strain TC1).